The chain runs to 427 residues: Histidine--tRNA ligase (427 aa).

This sequence belongs to the class-II aminoacyl-tRNA synthetase family. Homodimer.

The protein localises to the cytoplasm. The enzyme catalyses tRNA(His) + L-histidine + ATP = L-histidyl-tRNA(His) + AMP + diphosphate + H(+). This Chloroherpeton thalassium (strain ATCC 35110 / GB-78) protein is Histidine--tRNA ligase.